Reading from the N-terminus, the 784-residue chain is Lon protease (784 aa).

The region spanning 6–207 is the Lon N-terminal domain; sequence LPLMALRDMV…TVITTLTSNI (202 aa). Position 356–363 (356–363) interacts with ATP; sequence GPPGVGKT. In terms of domain architecture, Lon proteolytic spans 592–773; sequence EDQIGSTTGL…DQVLKHALVE (182 aa). Residues S679 and K722 contribute to the active site.

It belongs to the peptidase S16 family. In terms of assembly, homohexamer. Organized in a ring with a central cavity.

The protein resides in the cytoplasm. It catalyses the reaction Hydrolysis of proteins in presence of ATP.. Its function is as follows. ATP-dependent serine protease that mediates the selective degradation of mutant and abnormal proteins as well as certain short-lived regulatory proteins. Required for cellular homeostasis and for survival from DNA damage and developmental changes induced by stress. Degrades polypeptides processively to yield small peptide fragments that are 5 to 10 amino acids long. Binds to DNA in a double-stranded, site-specific manner. The protein is Lon protease of Rickettsia prowazekii (strain Madrid E).